The sequence spans 372 residues: uncharacterized protein (372 aa).

A helical transmembrane segment spans residues 224 to 244; it reads GSTVGVVIGVVIVIFIGFIII. Serine 329 carries the post-translational modification Phosphoserine.

The protein localises to the vacuole membrane. This is an uncharacterized protein from Saccharomyces cerevisiae (strain ATCC 204508 / S288c) (Baker's yeast).